The primary structure comprises 148 residues: Probable DNA-directed RNA polymerases I, II, and III subunit RPABC3 (148 aa).

The interval 16–40 (DPDGKKFDRVSRYFCDAESFKMELI) is non-specific ssDNA binding.

This sequence belongs to the eukaryotic RPB8 RNA polymerase subunit family. In terms of assembly, component of the RNA polymerase I (Pol I), RNA polymerase II (Pol II) and RNA polymerase III (Pol III) complexes consisting of at least 13, 12 and 17 subunits, respectively. Directly interacts with POLR2A.

It localises to the nucleus. Functionally, DNA-dependent RNA polymerase catalyzes the transcription of DNA into RNA using the four ribonucleoside triphosphates as substrates. Common component of RNA polymerases I, II and III which synthesize ribosomal RNA precursors, mRNA precursors and many functional non-coding RNAs, and small RNAs, such as 5S rRNA and tRNAs, respectively. This is Probable DNA-directed RNA polymerases I, II, and III subunit RPABC3 (rpb-8) from Caenorhabditis elegans.